The sequence spans 38 residues: Mu-agatoxin-Hc1b (38 aa).

4 disulfides stabilise this stretch: Cys3-Cys19, Cys10-Cys24, Cys18-Cys34, and Cys26-Cys32. Ser38 is subject to Serine amide.

Belongs to the neurotoxin 07 (Beta/delta-agtx) family. 02 (aga-3) subfamily. In terms of tissue distribution, expressed by the venom gland.

Its subcellular location is the secreted. Its function is as follows. Insecticidal neurotoxin that induces irreversible neuromuscular blockade in house crickets (A.domesticus). Modifies presynaptic voltage-gated sodium channels (Nav), causing them to open at the normal resting potential of the nerve. This leads to spontaneous release of neurotransmitter and repetitive action potentials in motor neurons. This chain is Mu-agatoxin-Hc1b, found in Hololena curta (Funnel-web spider).